Here is a 148-residue protein sequence, read N- to C-terminus: MQVILLDDVKALGKKGEVVNVSDGYARNFILPKKLGLEATPKNLNDLKLQKAAEAKLAQEILEQAQALAKEIESKSILLKIKSGEGGRTFGSVSTKEIAIALKEQLGHDIDKKKLVLNDPIKNMGTYTVPVKLHPKVTAELKVKVDSL.

Belongs to the bacterial ribosomal protein bL9 family.

In terms of biological role, binds to the 23S rRNA. The sequence is that of Large ribosomal subunit protein bL9 from Lachnoclostridium phytofermentans (strain ATCC 700394 / DSM 18823 / ISDg) (Clostridium phytofermentans).